Reading from the N-terminus, the 194-residue chain is Holliday junction branch migration complex subunit RuvA (194 aa).

The domain I stretch occupies residues 1–63; sequence MFEYLKGTVA…EDELSLYGFM (63 aa). The segment at 64-142 is domain II; it reads SIEELDMFQK…KTNVVYDYTL (79 aa). Residues 143-151 are flexible linker; it reads FNDDHKDDD. The tract at residues 151-194 is domain III; it reads DEAVQALMALGYSKLESEKAVEAVRDMSLGTEDVIKRALKWLMK.

It belongs to the RuvA family. As to quaternary structure, homotetramer. Forms an RuvA(8)-RuvB(12)-Holliday junction (HJ) complex. HJ DNA is sandwiched between 2 RuvA tetramers; dsDNA enters through RuvA and exits via RuvB. An RuvB hexamer assembles on each DNA strand where it exits the tetramer. Each RuvB hexamer is contacted by two RuvA subunits (via domain III) on 2 adjacent RuvB subunits; this complex drives branch migration. In the full resolvosome a probable DNA-RuvA(4)-RuvB(12)-RuvC(2) complex forms which resolves the HJ.

Its subcellular location is the cytoplasm. Its function is as follows. The RuvA-RuvB-RuvC complex processes Holliday junction (HJ) DNA during genetic recombination and DNA repair, while the RuvA-RuvB complex plays an important role in the rescue of blocked DNA replication forks via replication fork reversal (RFR). RuvA specifically binds to HJ cruciform DNA, conferring on it an open structure. The RuvB hexamer acts as an ATP-dependent pump, pulling dsDNA into and through the RuvAB complex. HJ branch migration allows RuvC to scan DNA until it finds its consensus sequence, where it cleaves and resolves the cruciform DNA. The chain is Holliday junction branch migration complex subunit RuvA from Alkaliphilus oremlandii (strain OhILAs) (Clostridium oremlandii (strain OhILAs)).